The sequence spans 455 residues: Mitochondrial inner membrane magnesium transporter LPE10 (455 aa).

The transit peptide at 1-56 (MHIKISTDFAIQNLHCTTMIRPLLRLCGQRTAATPFVSFFRPPKKPLSGISFARHY) directs the protein to the mitochondrion. The next 2 helical transmembrane spans lie at 365-385 (FQIG…YGMN) and 396-416 (GFLG…AHFL). The YGMN motif lies at 382-385 (YGMN). Positions 433-444 (KAMKKKDTVAEK) are enriched in basic and acidic residues. The interval 433 to 455 (KAMKKKDTVAEKRRNHLRNWLTK) is disordered.

This sequence belongs to the CorA metal ion transporter (MIT) (TC 1.A.35) family. As to quaternary structure, forms homooligomers. Interacts with MRS2.

It is found in the mitochondrion inner membrane. Its function is as follows. Mitochondrial inner membrane magnesium transporter required for mitochondrial magnesium homeostasis. Modulates the conductance of the MRS2 channel. Involved in the splicing of mRNA group II introns in mitochondria by affecting mitochondrial magnesium concentrations, which are critical for group II intron splicing. In Yarrowia lipolytica (strain CLIB 122 / E 150) (Yeast), this protein is Mitochondrial inner membrane magnesium transporter LPE10 (LPE10).